Here is a 118-residue protein sequence, read N- to C-terminus: Large ribosomal subunit protein eL18 (118 aa).

It belongs to the eukaryotic ribosomal protein eL18 family.

This is Large ribosomal subunit protein eL18 from Sulfurisphaera tokodaii (strain DSM 16993 / JCM 10545 / NBRC 100140 / 7) (Sulfolobus tokodaii).